A 141-amino-acid chain; its full sequence is Cytochrome c-type biogenesis protein CcmE (141 aa).

Residues 1–7 lie on the Cytoplasmic side of the membrane; sequence MRARTRR. Residues 8–28 form a helical; Signal-anchor for type II membrane protein membrane-spanning segment; sequence LYTFGIAAALIVAAAALAFFA. At 29-141 the chain is on the periplasmic side; it reads LRENANLFYT…RELKPLEAGG (113 aa). The heme site is built by His-125 and Tyr-129.

It belongs to the CcmE/CycJ family.

The protein resides in the cell inner membrane. Heme chaperone required for the biogenesis of c-type cytochromes. Transiently binds heme delivered by CcmC and transfers the heme to apo-cytochromes in a process facilitated by CcmF and CcmH. This is Cytochrome c-type biogenesis protein CcmE from Hyphomonas neptunium (strain ATCC 15444).